A 785-amino-acid chain; its full sequence is Endonuclease MutS2 (785 aa).

An ATP-binding site is contributed by 335 to 342; that stretch reads GPNTGGKT. One can recognise a Smr domain in the interval 710–785; sequence LDLRGERYED…GNGVTIVEFK (76 aa).

It belongs to the DNA mismatch repair MutS family. MutS2 subfamily. As to quaternary structure, homodimer. Binds to stalled ribosomes, contacting rRNA.

Endonuclease that is involved in the suppression of homologous recombination and thus may have a key role in the control of bacterial genetic diversity. Functionally, acts as a ribosome collision sensor, splitting the ribosome into its 2 subunits. Detects stalled/collided 70S ribosomes which it binds and splits by an ATP-hydrolysis driven conformational change. Acts upstream of the ribosome quality control system (RQC), a ribosome-associated complex that mediates the extraction of incompletely synthesized nascent chains from stalled ribosomes and their subsequent degradation. Probably generates substrates for RQC. This is Endonuclease MutS2 from Listeria monocytogenes serotype 4b (strain CLIP80459).